The primary structure comprises 423 residues: Transmembrane protease serine 11E (423 aa).

The Cytoplasmic portion of the chain corresponds to 1-18; sequence MYRSCVVRARKRTCVEPW. A helical; Signal-anchor for type II membrane protein transmembrane segment spans residues 19–39; it reads VIGIISFLSLIVLAVCIGLTV. The Extracellular portion of the chain corresponds to 40–423; that stretch reads HYVRYNHRRT…RHWIASNTGI (384 aa). The SEA domain maps to 48–166; it reads RTYNYYSTLS…ESVKIKKINK (119 aa). 4 N-linked (GlcNAc...) asparagine glycosylation sites follow: asparagine 74, asparagine 165, asparagine 182, and asparagine 223. 4 disulfide bridges follow: cysteine 176-cysteine 297, cysteine 217-cysteine 233, cysteine 342-cysteine 358, and cysteine 369-cysteine 398. A Peptidase S1 domain is found at 192-422; that stretch reads IVGGTPVEEE…FRHWIASNTG (231 aa). Catalysis depends on charge relay system residues histidine 232 and aspartate 277. Catalysis depends on serine 373, which acts as the Charge relay system.

Belongs to the peptidase S1 family. As to quaternary structure, forms a heterodimer with SERPINA5 and SERPINE1. N-glycosylated. As to expression, expressed in epidermal, oral and male reproductive tissues.

It is found in the cell membrane. It localises to the secreted. With respect to regulation, inhibited by SERPINA5. Functionally, serine protease which possesses both gelatinolytic and caseinolytic activities. Shows a preference for Arg in the P1 position. The protein is Transmembrane protease serine 11E (Tmprss11e) of Mus musculus (Mouse).